The chain runs to 156 residues: SsrA-binding protein (156 aa).

This sequence belongs to the SmpB family.

It localises to the cytoplasm. Required for rescue of stalled ribosomes mediated by trans-translation. Binds to transfer-messenger RNA (tmRNA), required for stable association of tmRNA with ribosomes. tmRNA and SmpB together mimic tRNA shape, replacing the anticodon stem-loop with SmpB. tmRNA is encoded by the ssrA gene; the 2 termini fold to resemble tRNA(Ala) and it encodes a 'tag peptide', a short internal open reading frame. During trans-translation Ala-aminoacylated tmRNA acts like a tRNA, entering the A-site of stalled ribosomes, displacing the stalled mRNA. The ribosome then switches to translate the ORF on the tmRNA; the nascent peptide is terminated with the 'tag peptide' encoded by the tmRNA and targeted for degradation. The ribosome is freed to recommence translation, which seems to be the essential function of trans-translation. The chain is SsrA-binding protein from Clostridium beijerinckii (strain ATCC 51743 / NCIMB 8052) (Clostridium acetobutylicum).